A 284-amino-acid chain; its full sequence is Gigasin-3a (284 aa).

The interval 202–284 is disordered; sequence GLDNPLPNPR…FKAGRKNNRN (83 aa). Positions 223 to 245 are enriched in low complexity; that stretch reads SSPLPESTPKSSTKTSSASPIKS. Residues 246 to 257 show a composition bias toward basic residues; the sequence is RQGKKLRGKKQN. Positions 258–267 are enriched in polar residues; the sequence is KTGNTRFTYR. Positions 268-284 are enriched in basic residues; it reads NNKRNIKFKAGRKNNRN.

In terms of tissue distribution, component of the organic matrix of calcified shell layers.

The chain is Gigasin-3a from Magallana gigas (Pacific oyster).